Reading from the N-terminus, the 152-residue chain is 3-hydroxyacyl-[acyl-carrier-protein] dehydratase FabZ (152 aa).

Histidine 58 is an active-site residue.

Belongs to the thioester dehydratase family. FabZ subfamily.

The protein resides in the cytoplasm. It carries out the reaction a (3R)-hydroxyacyl-[ACP] = a (2E)-enoyl-[ACP] + H2O. In terms of biological role, involved in unsaturated fatty acids biosynthesis. Catalyzes the dehydration of short chain beta-hydroxyacyl-ACPs and long chain saturated and unsaturated beta-hydroxyacyl-ACPs. The sequence is that of 3-hydroxyacyl-[acyl-carrier-protein] dehydratase FabZ from Prochlorococcus marinus (strain AS9601).